The sequence spans 64 residues: Large ribosomal subunit protein bL35c (64 aa).

The protein belongs to the bacterial ribosomal protein bL35 family.

It localises to the plastid. It is found in the chloroplast. The polypeptide is Large ribosomal subunit protein bL35c (Phaeodactylum tricornutum (strain CCAP 1055/1)).